A 197-amino-acid chain; its full sequence is Protein Hikeshi (197 aa).

Residues 18–55 (VAEDKFVFDLPDYENINHVVVFMLGTIPFPEGMGGSVY) form a required for F-X-F-G repeats-nucleoporins recognition and nuclear import region. The flexible linker region involved in nuclear import of HSP70 proteins stretch occupies residues 124-134 (QTPVGSAAVSS).

It belongs to the OPI10 family. Forms an asymmetric homodimer; required for binding and nuclear import of HSP70 proteins. Interacts with ATP-bound HSP70 proteins. Interacts with NUP62 and NUP153 (via F-X-F-G repeats). Interacts with HSPA8. As to expression, expressed in the central white matter of newborn and adult brain, particularly in regions where oligodendrocytes are generated.

Its subcellular location is the cytoplasm. The protein localises to the cytosol. It localises to the nucleus. Its function is as follows. Acts as a specific nuclear import carrier for HSP70 proteins following heat-shock stress: acts by mediating the nucleoporin-dependent translocation of ATP-bound HSP70 proteins into the nucleus. HSP70 proteins import is required to protect cells from heat shock damages. Does not translocate ADP-bound HSP70 proteins into the nucleus. May also be indirectly required for organization and/or function of the secretory apparatus in Club cells in lung. This Mus musculus (Mouse) protein is Protein Hikeshi.